The primary structure comprises 216 residues: DNA gyrase subunit B (216 aa).

Residues 140 to 216 (SELFLVEGDS…PDKLRYHKIV (77 aa)) enclose the Toprim domain.

The protein belongs to the type II topoisomerase GyrB family. In terms of assembly, heterotetramer, composed of two GyrA and two GyrB chains. In the heterotetramer, GyrA contains the active site tyrosine that forms a transient covalent intermediate with DNA, while GyrB binds cofactors and catalyzes ATP hydrolysis.

It localises to the cytoplasm. It carries out the reaction ATP-dependent breakage, passage and rejoining of double-stranded DNA.. A type II topoisomerase that negatively supercoils closed circular double-stranded (ds) DNA in an ATP-dependent manner to modulate DNA topology and maintain chromosomes in an underwound state. Negative supercoiling favors strand separation, and DNA replication, transcription, recombination and repair, all of which involve strand separation. Also able to catalyze the interconversion of other topological isomers of dsDNA rings, including catenanes and knotted rings. Type II topoisomerases break and join 2 DNA strands simultaneously in an ATP-dependent manner. The protein is DNA gyrase subunit B (gyrB) of Acinetobacter sp. (strain SEIP 12.81).